A 447-amino-acid chain; its full sequence is Phosphoglucosamine mutase (447 aa).

Serine 108 (phosphoserine intermediate) is an active-site residue. 4 residues coordinate Mg(2+): serine 108, aspartate 247, aspartate 249, and aspartate 251. Serine 108 is subject to Phosphoserine.

It belongs to the phosphohexose mutase family. Mg(2+) is required as a cofactor. Post-translationally, activated by phosphorylation.

It catalyses the reaction alpha-D-glucosamine 1-phosphate = D-glucosamine 6-phosphate. Its function is as follows. Catalyzes the conversion of glucosamine-6-phosphate to glucosamine-1-phosphate. The protein is Phosphoglucosamine mutase of Bordetella petrii (strain ATCC BAA-461 / DSM 12804 / CCUG 43448).